Reading from the N-terminus, the 96-residue chain is MEYKDPMHELLSSLEQIVFKDETQKITLTHRTTSCTEIEQLRKGTGLKIDDFARVLGVSVAMVKEWESRRVKPSSAELKLMRLIQANPALSKQLME.

An HTH cro/C1-type domain is found at 38 to 91; that stretch reads IEQLRKGTGLKIDDFARVLGVSVAMVKEWESRRVKPSSAELKLMRLIQANPALS. A DNA-binding region (H-T-H motif) is located at residues 49–68; it reads IDDFARVLGVSVAMVKEWES.

This is an uncharacterized protein from Escherichia coli O157:H7.